The sequence spans 351 residues: Chorismate synthase (351 aa).

The tract at residues 39 to 60 is disordered; it reads EDIQRDLERRRPGKRLTSPRGE. 2 residues coordinate NADP(+): arginine 48 and arginine 53. FMN contacts are provided by residues 124-126, alanine 276, 291-295, and arginine 317; these read RSS and KPIPS.

This sequence belongs to the chorismate synthase family. Homotetramer. FMNH2 is required as a cofactor.

The enzyme catalyses 5-O-(1-carboxyvinyl)-3-phosphoshikimate = chorismate + phosphate. It functions in the pathway metabolic intermediate biosynthesis; chorismate biosynthesis; chorismate from D-erythrose 4-phosphate and phosphoenolpyruvate: step 7/7. In terms of biological role, catalyzes the anti-1,4-elimination of the C-3 phosphate and the C-6 proR hydrogen from 5-enolpyruvylshikimate-3-phosphate (EPSP) to yield chorismate, which is the branch point compound that serves as the starting substrate for the three terminal pathways of aromatic amino acid biosynthesis. This reaction introduces a second double bond into the aromatic ring system. The protein is Chorismate synthase of Syntrophobacter fumaroxidans (strain DSM 10017 / MPOB).